Reading from the N-terminus, the 968-residue chain is MSLYQRYLSKSLIFIFSLFFLILFFLESSIGFKYFFNFTNYFFIGLKTEEISGNWRDFKLKKINFNIFGTSIKAESVHIITDPISLFKVSTILKKIKTKNLVISFNKKIKKVALKNNFLKEKKIKNTIFFKHSLILRKIYSDKILLKTQKKNIFLFGVFSGLQLSNDTCTFLPTKINSIYIDSSMRNVKNIDNKKSNFFIKKDIFYRNKIDNALSFFSIFKNFFIPININLINLKCNQLKFFNRTFLDIYKIKMSAQLKKNILKIKKIQIYSKYFKTKSKGKIFFRSDFSIFFIVKNEMSINIINNKAMNLLFKDTIDHKLNFKSNNLIKFNIHGEISLDDLNYPIHINLHLNRLFLPISKNLILSSKNFNFSLKGKINNYFLSLKNIINISGMPSFFISISAIGNIQNVVIKKIHFFPFFKEIKTKKFIKIKKEIDYNKYITQLAGKMRILSDFNKQSSNIFLPYFHVYGDFMRKKISVLGSLYYRKLNGITIPRINFLLGKNKGHISGSISKKVNLRSSIYANNLNYFSPNLKGIIKATLNIYSFCSLPSFSSVILGQKINWKNILYFNNIKITTNGNLKKSFPNKFFADFKNIRFSKFHINSLHIKSDWNNINQKFSLSLKDKKLSITFILNGHLNRKVGIWKGVLKKIDVKTSWGQWISRNNPLIFYHIKNSINFKNIKKIKNKNAFYSAINNIQTSLFKLIRQSPVKFQTDLFFNTQFQWKLRENITNLKLFLKGSNINLEKKIKEKIMFEKISAVNLYINFKKNNFITKWIIKKSKNSLKVNKISGFLNIYDFFHEKKIEGKVFLSDFSCSFLNFFENFFTKIQGKFSGNINFLGTIYQPQISADINFQDFYIKSDKIFKYMLLFFCSFPNKIENIKINQEIIMKKGNALFKLNSVVKNNISHIKWNILFHSNKLAIVLFPKIKLNFSSQLNLYYFLSKYDLIGYLKFSFFSFKINEKNFLF.

The helical transmembrane segment at 12–32 (LIFIFSLFFLILFFLESSIGF) threads the bilayer.

To E.coli YtfN.

It localises to the membrane. This is an uncharacterized protein from Buchnera aphidicola subsp. Schizaphis graminum (strain Sg).